Consider the following 305-residue polypeptide: Tyrosine recombinase XerC (305 aa).

Residues 1–93 form the Core-binding (CB) domain; the sequence is MVLDGFAAYF…AWRQYCAWLV (93 aa). Residues 114-294 enclose the Tyr recombinase domain; it reads RVPKALPQEW…DFDHIARLYD (181 aa). Catalysis depends on residues Arg-155, Lys-179, His-246, Arg-249, and His-272. Tyr-281 serves as the catalytic O-(3'-phospho-DNA)-tyrosine intermediate.

This sequence belongs to the 'phage' integrase family. XerC subfamily. As to quaternary structure, forms a cyclic heterotetrameric complex composed of two molecules of XerC and two molecules of XerD.

The protein localises to the cytoplasm. Its function is as follows. Site-specific tyrosine recombinase, which acts by catalyzing the cutting and rejoining of the recombining DNA molecules. The XerC-XerD complex is essential to convert dimers of the bacterial chromosome into monomers to permit their segregation at cell division. It also contributes to the segregational stability of plasmids. The polypeptide is Tyrosine recombinase XerC (Neisseria gonorrhoeae (strain ATCC 700825 / FA 1090)).